The following is a 250-amino-acid chain: Ribonuclease HII (250 aa).

An RNase H type-2 domain is found at 66-250 (QLVAGVDEVG…SFAPVSEYEK (185 aa)). A divalent metal cation contacts are provided by Asp72, Glu73, and Asp164.

The protein belongs to the RNase HII family. The cofactor is Mn(2+). It depends on Mg(2+) as a cofactor.

It is found in the cytoplasm. The catalysed reaction is Endonucleolytic cleavage to 5'-phosphomonoester.. Its function is as follows. Endonuclease that specifically degrades the RNA of RNA-DNA hybrids. In Lactobacillus gasseri (strain ATCC 33323 / DSM 20243 / BCRC 14619 / CIP 102991 / JCM 1131 / KCTC 3163 / NCIMB 11718 / NCTC 13722 / AM63), this protein is Ribonuclease HII.